The chain runs to 264 residues: Thymidylate synthase (264 aa).

Arg21 contacts dUMP. His51 is a (6R)-5,10-methylene-5,6,7,8-tetrahydrofolate binding site. 126 to 127 (RR) is a binding site for dUMP. Cys146 functions as the Nucleophile in the catalytic mechanism. DUMP contacts are provided by residues 166–169 (RSCD), Asn177, and 207–209 (HLY). Asp169 is a (6R)-5,10-methylene-5,6,7,8-tetrahydrofolate binding site. Ala263 contributes to the (6R)-5,10-methylene-5,6,7,8-tetrahydrofolate binding site.

It belongs to the thymidylate synthase family. Bacterial-type ThyA subfamily. As to quaternary structure, homodimer.

The protein resides in the cytoplasm. It carries out the reaction dUMP + (6R)-5,10-methylene-5,6,7,8-tetrahydrofolate = 7,8-dihydrofolate + dTMP. It participates in pyrimidine metabolism; dTTP biosynthesis. Functionally, catalyzes the reductive methylation of 2'-deoxyuridine-5'-monophosphate (dUMP) to 2'-deoxythymidine-5'-monophosphate (dTMP) while utilizing 5,10-methylenetetrahydrofolate (mTHF) as the methyl donor and reductant in the reaction, yielding dihydrofolate (DHF) as a by-product. This enzymatic reaction provides an intracellular de novo source of dTMP, an essential precursor for DNA biosynthesis. This is Thymidylate synthase from Buchnera aphidicola subsp. Baizongia pistaciae (strain Bp).